A 540-amino-acid chain; its full sequence is Zinc finger CCCH domain-containing protein 46 (540 aa).

The C3H1-type zinc-finger motif lies at 148 to 175 (GFGGVPCSYFARGFCKNGASCRFVHSDG). In terms of domain architecture, RRM spans 258–334 (RQIYLTFPAD…RVLVKPYKEK (77 aa)). Composition is skewed to basic and acidic residues over residues 337–351 (VPDK…EREL) and 436–450 (EYDG…SKEG). Disordered regions lie at residues 337 to 365 (VPDK…DVLG), 436 to 469 (EYDG…LPDS), and 490 to 514 (SDLW…SFNS). Phosphoserine is present on S451. A compositionally biased stretch (low complexity) spans 490–511 (SDLWSPSSDNDDNSTPSTLSDS).

In terms of biological role, possesses RNA-binding and ribonuclease activities in vitro. The chain is Zinc finger CCCH domain-containing protein 46 from Arabidopsis thaliana (Mouse-ear cress).